Here is a 115-residue protein sequence, read N- to C-terminus: ATP synthase subunit g, mitochondrial (115 aa).

Position 1 is an N-acetylmethionine (M1). A phosphoserine mark is found at S3 and S62.

It belongs to the ATPase g subunit family. As to quaternary structure, F-type ATPases have 2 components, CF(1) - the catalytic core - and CF(0) - the membrane proton channel. In yeast, the dimeric form of ATP synthase consists of 17 polypeptides: alpha, beta, gamma, delta, epsilon, 4 (B), 5 (OSCP), 6 (A), 8, 9 (C), d, E (Tim11), f, g, h, i/j and k. In terms of processing, phosphorylation on Ser-62 impairs ATP synthase dimerization.

The protein localises to the mitochondrion membrane. Its function is as follows. Mitochondrial membrane ATP synthase (F(1)F(0) ATP synthase or Complex V) produces ATP from ADP in the presence of a proton gradient across the membrane which is generated by electron transport complexes of the respiratory chain. F-type ATPases consist of two structural domains, F(1) - containing the extramembraneous catalytic core, and F(0) - containing the membrane proton channel, linked together by a central stalk and a peripheral stalk. During catalysis, ATP synthesis in the catalytic domain of F(1) is coupled via a rotary mechanism of the central stalk subunits to proton translocation. Part of the complex F(0) domain. Minor subunit located with subunit a in the membrane. The sequence is that of ATP synthase subunit g, mitochondrial (ATP20) from Saccharomyces cerevisiae (strain ATCC 204508 / S288c) (Baker's yeast).